The primary structure comprises 132 residues: Cytochrome b5 (132 aa).

In terms of domain architecture, Cytochrome b5 heme-binding spans G2–D78. Heme is bound by residues H37 and H61. The helical transmembrane segment at F104–I124 threads the bilayer.

The protein belongs to the cytochrome b5 family.

The protein localises to the endoplasmic reticulum membrane. The protein resides in the microsome membrane. Functionally, membrane bound hemoprotein which function as an electron carrier for several membrane bound oxygenases. In Borago officinalis (Bourrache), this protein is Cytochrome b5.